A 304-amino-acid chain; its full sequence is Polyisoprenyl-teichoic acid--peptidoglycan teichoic acid transferase TagU (304 aa).

Over 1–3 the chain is Cytoplasmic; sequence MKK. The helical; Signal-anchor for type II membrane protein transmembrane segment at 4–24 threads the bilayer; it reads ALIAIGLILGTITVAIIGYGI. Over 25–304 the chain is Extracellular; that stretch reads YLYSSIQNTA…GELKSHLELS (280 aa).

The protein belongs to the LytR/CpsA/Psr (LCP) family.

The protein resides in the cell membrane. Its pathway is cell wall biogenesis. Its function is as follows. May catalyze the final step in cell wall teichoic acid biosynthesis, the transfer of the anionic cell wall polymers (APs) from their lipid-linked precursor to the cell wall peptidoglycan (PG). The sequence is that of Polyisoprenyl-teichoic acid--peptidoglycan teichoic acid transferase TagU from Halalkalibacterium halodurans (strain ATCC BAA-125 / DSM 18197 / FERM 7344 / JCM 9153 / C-125) (Bacillus halodurans).